Reading from the N-terminus, the 415-residue chain is Amylovoran biosynthesis protein AmsJ (415 aa).

The protein belongs to the polysaccharide pyruvyl transferase family.

Its pathway is glycan metabolism; exopolysaccharide biosynthesis. Involved in the biosynthesis of amylovoran which functions as a virulence factor. The protein is Amylovoran biosynthesis protein AmsJ (amsJ) of Erwinia amylovora (Fire blight bacteria).